We begin with the raw amino-acid sequence, 139 residues long: Holo-[acyl-carrier-protein] synthase (139 aa).

Mg(2+) contacts are provided by Asp8 and Glu57.

It belongs to the P-Pant transferase superfamily. AcpS family. Mg(2+) serves as cofactor.

It localises to the cytoplasm. It catalyses the reaction apo-[ACP] + CoA = holo-[ACP] + adenosine 3',5'-bisphosphate + H(+). Its function is as follows. Transfers the 4'-phosphopantetheine moiety from coenzyme A to a Ser of acyl-carrier-protein. This is Holo-[acyl-carrier-protein] synthase from Rhizobium meliloti (strain 1021) (Ensifer meliloti).